The sequence spans 41 residues: Large ribosomal subunit protein bL36 (41 aa).

The protein belongs to the bacterial ribosomal protein bL36 family.

This is Large ribosomal subunit protein bL36 from Paracoccus denitrificans (strain Pd 1222).